A 183-amino-acid chain; its full sequence is Caspase recruitment domain-containing protein 19 (183 aa).

The cysteines at positions 7 and 77 are disulfide-linked. Positions 8–99 (DRLVQDTPFL…PLHSHLPSRY (92 aa)) constitute a CARD domain. Residues 122-142 (GPMSFLAGLGLAAGLALLLYC) form a helical membrane-spanning segment.

In terms of assembly, associates with BCL10 by CARD-CARD interaction.

It is found in the endoplasmic reticulum membrane. The protein resides in the mitochondrion membrane. Its function is as follows. Plays a role in inhibiting the effects of BCL10-induced activation of NF-kappa-B. The chain is Caspase recruitment domain-containing protein 19 from Mus musculus (Mouse).